A 1009-amino-acid chain; its full sequence is Protein-tyrosine kinase 2-beta (1009 aa).

The region spanning 39-359 is the FERM domain; the sequence is RILKVCFYSN…GYCRLQGEHK (321 aa). Phosphoserine occurs at positions 361, 375, and 399. Y402 carries the post-translational modification Phosphotyrosine; by autocatalysis. A Protein kinase domain is found at 425 to 683; that stretch reads VVLNRILGEG…ELVCSLSDIY (259 aa). Residues 431-439, K457, and 503-509 contribute to the ATP site; these read LGEGFFGEV and ELYPYGE. Residue D549 is the Proton acceptor of the active site. 3 positions are modified to phosphotyrosine: Y579, Y580, and Y722. A disordered region spans residues 702–725; the sequence is PKILEPTAFQEPPPKPSRPKYKHP. The residue at position 762 (S762) is a Phosphoserine. T765 carries the phosphothreonine modification. Positions 801 to 1009 are interaction with TGFB1I1; the sequence is KIKMRQVLDR…VANLAHPPAE (209 aa). The residue at position 834 (Y834) is a Phosphotyrosine. S839 carries the post-translational modification Phosphoserine. Residue T842 is modified to Phosphothreonine. At Y849 the chain carries Phosphotyrosine. S866 is modified (phosphoserine). The tract at residues 868 to 1009 is focal adhesion targeting (FAT); that stretch reads QPTANLDRTD…VANLAHPPAE (142 aa). The residue at position 881 (Y881) is a Phosphotyrosine.

The protein belongs to the protein kinase superfamily. Tyr protein kinase family. FAK subfamily. As to quaternary structure, homodimer, or homooligomer. Interacts with NPHP1, ASAP1, ASAP2, ARHGAP26, SKAP2 and TGFB1I1. The Tyr-402 phosphorylated form interacts with SRC (via SH2 domain) and SRC family members. Forms a signaling complex with EPHA1, LCK and phosphatidylinositol 3-kinase; upon activation by EFNA1. Interacts with GRB2 (via SH2 domain). Interacts with P53/TP53 and MDM2. Interacts with MYLK. Interacts with BCAR1. Interacts with RB1CC1. Interacts with RHOU. Interacts with VAV1. Interacts with PDPK1. Interacts with LPXN and PTPN12. Interacts with SIRPA and SH2D3C. Interacts (hypophosphorylated) with PXN. Interacts with ARHGAP10. Interacts with KCNA2. Phosphorylated on tyrosine residues in response to various stimuli that elevate the intracellular calcium concentration; this activation is indirect and may be mediated by production of reactive oxygen species (ROS). Tyr-402 is the major autophosphorylation site, but other kinases can also phosphorylate Tyr-402. Autophosphorylation occurs in trans, i.e. one subunit of the dimeric receptor phosphorylates tyrosine residues on the other subunit. Phosphorylation at Tyr-402 promotes interaction with SRC and SRC family members, leading to phosphorylation at Tyr-579; Tyr-580 and Tyr-881. Phosphorylation at Tyr-881 is important for interaction with GRB2. Phosphorylated on tyrosine residues upon activation of FGR and PKC. Recruitment by NPHP1 to cell matrix adhesions initiates Tyr-402 phosphorylation. In monocytes, adherence to substrata is required for tyrosine phosphorylation and kinase activation. Angiotensin II, thapsigargin and L-alpha-lysophosphatidic acid (LPA) also induce autophosphorylation and increase kinase activity. Phosphorylation by MYLK promotes ITGB2 activation and is thus essential to trigger neutrophil transmigration during lung injury. Dephosphorylated by PTPN12. In terms of tissue distribution, highly expressed in pulmonary vein endothelial cells, lung and brain (at protein level). Isoform 1 is expressed at high levels in the brain (hippocampus, cerebral cortex and olfactory bulb) and poorly in the spleen and other tissues, whereas isoforms 2 and 3 are expressed in the spleen and brain (highest in cerebellum).

It localises to the cytoplasm. Its subcellular location is the perinuclear region. The protein resides in the cell membrane. The protein localises to the cell projection. It is found in the lamellipodium. It localises to the cell cortex. Its subcellular location is the nucleus. The protein resides in the cell junction. The protein localises to the focal adhesion. The catalysed reaction is L-tyrosyl-[protein] + ATP = O-phospho-L-tyrosyl-[protein] + ADP + H(+). With respect to regulation, activated in response to stimuli that lead to increased intracellular Ca(2+) levels; this activation is indirect and may be mediated by calcium-mediated production of reactive oxygen species (ROS). Activated by autophosphorylation at Tyr-402; this creates a binding site for SRC family kinases and leads to phosphorylation at additional tyrosine residues. Phosphorylation at Tyr-402, Tyr-579 and Tyr-580 is required for optimal kinase activity. Non-receptor protein-tyrosine kinase that regulates reorganization of the actin cytoskeleton, cell polarization, cell migration, adhesion, spreading and bone remodeling. Plays a role in the regulation of the humoral immune response, and is required for normal levels of marginal B-cells in the spleen and normal migration of splenic B-cells. Required for normal macrophage polarization and migration towards sites of inflammation. Regulates cytoskeleton rearrangement and cell spreading in T-cells, and contributes to the regulation of T-cell responses. Promotes osteoclastic bone resorption; this requires both PTK2B/PYK2 and SRC. May inhibit differentiation and activity of osteoprogenitor cells. Functions in signaling downstream of integrin and collagen receptors, immune receptors, G-protein coupled receptors (GPCR), cytokine, chemokine and growth factor receptors, and mediates responses to cellular stress. Forms multisubunit signaling complexes with SRC and SRC family members upon activation; this leads to the phosphorylation of additional tyrosine residues, creating binding sites for scaffold proteins, effectors and substrates. Regulates numerous signaling pathways. Promotes activation of phosphatidylinositol 3-kinase and of the AKT1 signaling cascade. Promotes activation of NOS3. Regulates production of the cellular messenger cGMP. Promotes activation of the MAP kinase signaling cascade, including activation of MAPK1/ERK2, MAPK3/ERK1 and MAPK8/JNK1. Promotes activation of Rho family GTPases, such as RHOA and RAC1. Recruits the ubiquitin ligase MDM2 to P53/TP53 in the nucleus, and thereby regulates P53/TP53 activity, P53/TP53 ubiquitination and proteasomal degradation. Acts as a scaffold, binding to both PDPK1 and SRC, thereby allowing SRC to phosphorylate PDPK1 at 'Tyr-9, 'Tyr-373', and 'Tyr-376'. Promotes phosphorylation of NMDA receptors by SRC family members, and thereby contributes to the regulation of NMDA receptor ion channel activity and intracellular Ca(2+) levels. May also regulate potassium ion transport by phosphorylation of potassium channel subunits. Phosphorylates SRC; this increases SRC kinase activity. Phosphorylates ASAP1, NPHP1, KCNA2 and SHC1. Promotes phosphorylation of ASAP2, RHOU and PXN; this requires both SRC and PTK2/PYK2. This is Protein-tyrosine kinase 2-beta (Ptk2b) from Rattus norvegicus (Rat).